The following is a 246-amino-acid chain: Putative L,D-transpeptidase YafK (246 aa).

The signal sequence occupies residues 1–19; the sequence is MRKIALILAMLLIPCVSFA. The L,D-TPase catalytic domain occupies 44–174; it reads VYIQIFKEER…GQPSVQVSIY (131 aa). His135 (proton donor/acceptor) is an active-site residue. Catalysis depends on Cys143, which acts as the Nucleophile.

The protein belongs to the YkuD family.

It participates in cell wall biogenesis; peptidoglycan biosynthesis. This Escherichia coli O157:H7 protein is Putative L,D-transpeptidase YafK (yafK).